The chain runs to 350 residues: Methylthioribose-1-phosphate isomerase (350 aa).

Substrate is bound by residues 47-49 (RGA), Arg-90, and Gln-197. The active-site Proton donor is Asp-238. 248–249 (NK) serves as a coordination point for substrate.

This sequence belongs to the eIF-2B alpha/beta/delta subunits family. MtnA subfamily.

The catalysed reaction is 5-(methylsulfanyl)-alpha-D-ribose 1-phosphate = 5-(methylsulfanyl)-D-ribulose 1-phosphate. It functions in the pathway amino-acid biosynthesis; L-methionine biosynthesis via salvage pathway; L-methionine from S-methyl-5-thio-alpha-D-ribose 1-phosphate: step 1/6. In terms of biological role, catalyzes the interconversion of methylthioribose-1-phosphate (MTR-1-P) into methylthioribulose-1-phosphate (MTRu-1-P). This Nitratidesulfovibrio vulgaris (strain DP4) (Desulfovibrio vulgaris) protein is Methylthioribose-1-phosphate isomerase.